The following is a 121-amino-acid chain: Ribonuclease P protein component (121 aa).

Belongs to the RnpA family. As to quaternary structure, consists of a catalytic RNA component (M1 or rnpB) and a protein subunit.

The enzyme catalyses Endonucleolytic cleavage of RNA, removing 5'-extranucleotides from tRNA precursor.. RNaseP catalyzes the removal of the 5'-leader sequence from pre-tRNA to produce the mature 5'-terminus. It can also cleave other RNA substrates such as 4.5S RNA. The protein component plays an auxiliary but essential role in vivo by binding to the 5'-leader sequence and broadening the substrate specificity of the ribozyme. The protein is Ribonuclease P protein component of Rickettsia prowazekii (strain Madrid E).